The following is a 495-amino-acid chain: Bile acid-sensitive ion channel (495 aa).

Residues 1–30 (MEHTEKSQVHAEKGLLGKIKRYLSKRPLPS) are binds the plasma membrane and stabilizes the channel in the closed state. At 1–61 (MEHTEKSQVH…NIAQNQNKVR (61 aa)) the chain is on the cytoplasmic side. A helical membrane pass occupies residues 62 to 82 (KVIWLAVVLGSVSLLVWQIYS). Over 83 to 459 (RLVNYFTWPT…GLFCGASLIT (377 aa)) the chain is Extracellular. 6 cysteine pairs are disulfide-bonded: C112–C207, C185–C192, C298–C377, C315–C373, C328–C350, and C330–C342. 3 N-linked (GlcNAc...) asparagine glycosylation sites follow: N147, N163, and N179. Residues N370, N405, and N421 are each glycosylated (N-linked (GlcNAc...) asparagine). The GAS motif; ion selectivity filter signature appears at 454–456 (GAS). A helical membrane pass occupies residues 460–480 (IIEIIEYFFTNFYWVLIFFLL). Residues 481 to 495 (KILETIQRTSPPQAV) lie on the Cytoplasmic side of the membrane.

The protein belongs to the amiloride-sensitive sodium channel (TC 1.A.6) family. ASIC5 subfamily. In terms of assembly, forms homotrimeric channels. Expressed by cholangiocytes (at protein level). Detected in cerebellum, brainstem, kidney, liver, hepatocytes, lung, intestine and embryo. In the cerebellum, restricted to interneurons in the granular layer, specifically in GRM1-expressing unipolar brush cells of the vestibulocerebellum.

Its subcellular location is the apical cell membrane. It localises to the cell membrane. The enzyme catalyses Na(+)(in) = Na(+)(out). The catalysed reaction is Li(+)(in) = Li(+)(out). It catalyses the reaction K(+)(in) = K(+)(out). It carries out the reaction H(+)(in) = H(+)(out). Its activity is regulated as follows. Inhibited by the diuretic drug amiloride. Contrary to its rat ortholog it is not inhibited by Ca(2+). Functionally, forms bile acid-gated sodium channels and may play a role in bile acid-dependent absorption and secretion by epithelial cells of the bile ducts. Displays high selectivity for sodium ions but can also permit the permeation of other cations. The gating could be indirect and the consequence of alterations of the membrane environment of the channel by bile acids. As a sodium channel of type II unipolar brush cells of the vestibulocerebellum, controlling the electrical activity of these cells, could play a role in motor coordination and balance. The chain is Bile acid-sensitive ion channel from Mus musculus (Mouse).